Here is a 563-residue protein sequence, read N- to C-terminus: NAD(P)H-quinone oxidoreductase chain 4 (563 aa).

A run of 15 helical transmembrane segments spans residues 25–45 (FPWL…VPFI), 56–76 (WFAL…YLYG), 90–110 (VSWL…ISMP), 111–131 (LILL…PVTF), 133–153 (PKLF…VFAV), 157–177 (LLFF…LAIW), 189–209 (FIIY…AMGF), 230–250 (GFQL…LPIV), 264–284 (TAPV…YALM), 298–318 (FAPL…LTSF), 335–355 (MGFV…GAML), 356–376 (QMIS…ATYD), 397–417 (FALW…SGFV), 438–458 (IVIA…LLSM), and 485–505 (VYII…PRLM).

It belongs to the complex I subunit 4 family.

It localises to the cellular thylakoid membrane. The enzyme catalyses a plastoquinone + NADH + (n+1) H(+)(in) = a plastoquinol + NAD(+) + n H(+)(out). It carries out the reaction a plastoquinone + NADPH + (n+1) H(+)(in) = a plastoquinol + NADP(+) + n H(+)(out). NDH-1 shuttles electrons from NAD(P)H, via FMN and iron-sulfur (Fe-S) centers, to quinones in the respiratory chain. The immediate electron acceptor for the enzyme in this species is believed to be plastoquinone. Couples the redox reaction to proton translocation (for every two electrons transferred, four hydrogen ions are translocated across the cytoplasmic membrane), and thus conserves the redox energy in a proton gradient. The polypeptide is NAD(P)H-quinone oxidoreductase chain 4 (Prochlorococcus marinus (strain MIT 9303)).